A 178-amino-acid chain; its full sequence is Large ribosomal subunit protein uL6 (178 aa).

Belongs to the universal ribosomal protein uL6 family. As to quaternary structure, part of the 50S ribosomal subunit.

Its function is as follows. This protein binds to the 23S rRNA, and is important in its secondary structure. It is located near the subunit interface in the base of the L7/L12 stalk, and near the tRNA binding site of the peptidyltransferase center. The polypeptide is Large ribosomal subunit protein uL6 (Streptococcus pyogenes serotype M3 (strain ATCC BAA-595 / MGAS315)).